The sequence spans 236 residues: 3-deoxy-D-manno-octulosonic acid kinase (236 aa).

D167 is an active-site residue.

The protein belongs to the protein kinase superfamily. KdkA/RfaP family.

The protein localises to the cell inner membrane. It carries out the reaction an alpha-Kdo-(2-&gt;6)-lipid IVA + ATP = a 4-O-phospho-alpha-Kdo-(2-&gt;6)-lipid IVA + ADP + H(+). It functions in the pathway bacterial outer membrane biogenesis; LPS core biosynthesis. In terms of biological role, catalyzes the ATP-dependent phosphorylation of the 3-deoxy-D-manno-octulosonic acid (Kdo) residue in Kdo-lipid IV(A) at the 4-OH position. This Vibrio vulnificus (strain CMCP6) protein is 3-deoxy-D-manno-octulosonic acid kinase.